Consider the following 269-residue polypeptide: MISLSDLRKFKTEGRKFSCLTCYDASMAKAMEFAEIDSILIGDSLGMVIQGHDSTLPVTVDDMAYHTAAVRRGNQHSFIMTDLPFMSYATLPDALNNAKKVMQAGAQMIKIEGGAWLSESIRVLTQNGIPVCVHLGLTPQSVHVFGGYKLQAKTREAADQLIADCQAVVDAGAAILLLECVPAQLGQEIAELFPQTPVIGIGAGKETDGQVLVAQDMLGLSFGKVARFVRNFMKEQAGETAIVDAFKAYHAAVQDQSFPAREHTFQVEL.

Residues aspartate 43 and aspartate 82 each coordinate Mg(2+). 3-methyl-2-oxobutanoate is bound by residues aspartate 43–serine 44, aspartate 82, and lysine 110. A Mg(2+)-binding site is contributed by glutamate 112. Glutamate 179 acts as the Proton acceptor in catalysis.

It belongs to the PanB family. In terms of assembly, homodecamer; pentamer of dimers. It depends on Mg(2+) as a cofactor.

The protein resides in the cytoplasm. The catalysed reaction is 3-methyl-2-oxobutanoate + (6R)-5,10-methylene-5,6,7,8-tetrahydrofolate + H2O = 2-dehydropantoate + (6S)-5,6,7,8-tetrahydrofolate. The protein operates within cofactor biosynthesis; (R)-pantothenate biosynthesis; (R)-pantoate from 3-methyl-2-oxobutanoate: step 1/2. Functionally, catalyzes the reversible reaction in which hydroxymethyl group from 5,10-methylenetetrahydrofolate is transferred onto alpha-ketoisovalerate to form ketopantoate. The chain is 3-methyl-2-oxobutanoate hydroxymethyltransferase from Acinetobacter baylyi (strain ATCC 33305 / BD413 / ADP1).